Reading from the N-terminus, the 475-residue chain is Ankyrin repeat, SAM and basic leucine zipper domain-containing protein 1 (475 aa).

Residues 1-24 (MAAGPLRGLAVAGGGESSESEDDG) form a disordered region. Residues Ser-17, Ser-18, and Ser-20 each carry the phosphoserine modification. ANK repeat units follow at residues 45–74 (ERQETFKKALTSGNISLVEELLDSGISVDT), 78–107 (YGWTSLMYAASVSNVELVRVLLDRGANASF), 110–144 (DKQTVLITACSARGSEEKILKCIELLLSRNADPNV), 148–177 (RLMTPIMYAARDGHPQVVALLVAHGAEVNT), 181–210 (NGYTALTWAARQGHKNVVLKLLELGANKMI), and 214–243 (DGKTPSEIAKRNKHLEIFNFLSLTLNPLEG). The 63-residue stretch at 272–334 (SYTAFGDLEI…KIMAALKELE (63 aa)) folds into the SAM domain.

As to quaternary structure, interacts with DDX4, PIWIL1, RANBP9 and TDRD1.

The protein localises to the cytoplasm. In terms of biological role, plays a central role during spermatogenesis by repressing transposable elements and preventing their mobilization, which is essential for the germline integrity. Acts via the piRNA metabolic process, which mediates the repression of transposable elements during meiosis by forming complexes composed of piRNAs and Piwi proteins and governs the methylation and subsequent repression of transposons. Its association with pi-bodies suggests a participation in the primary piRNAs metabolic process. Required prior to the pachytene stage to facilitate the production of multiple types of piRNAs, including those associated with repeats involved in the regulation of retrotransposons. May act by mediating protein-protein interactions during germ cell maturation. The chain is Ankyrin repeat, SAM and basic leucine zipper domain-containing protein 1 (ASZ1) from Ovis aries (Sheep).